The sequence spans 324 residues: Olfactory receptor 52N5 (324 aa).

The Extracellular segment spans residues 1-33; that stretch reads MPLFNSLCWFPTIHVTPPSFILNGIPGLERVHV. Residues 34 to 54 traverse the membrane as a helical segment; sequence WISLPLCTMYIIFLVGNLGLV. Residues 55–62 lie on the Cytoplasmic side of the membrane; the sequence is YLIYYEES. A helical membrane pass occupies residues 63–84; the sequence is LHHPMYFFFGHALSLIDLLTCT. Topologically, residues 85–108 are extracellular; it reads TTLPNALCIFWFSLKEINFNACLA. An intrachain disulfide couples C106 to C198. The helical transmembrane segment at 109-129 threads the bilayer; sequence QMFFVHGFTGVESGVLMLMAL. Residues 130–148 lie on the Cytoplasmic side of the membrane; it reads DRYVAICYPLRYATTLTNP. The chain crosses the membrane as a helical span at residues 149-169; that stretch reads IIAKAELATFLRGVLLMIPFP. Residues 170–205 lie on the Extracellular side of the membrane; that stretch reads FLVKRLPFCQSNIISHTYCDHMSVVKLSCASIKVNV. The helical transmembrane segment at 206–226 threads the bilayer; it reads IYGLMVALLIGVFDICCISLS. The Cytoplasmic portion of the chain corresponds to 227-246; sequence YTLILKAAISLSSSDARQKA. A helical transmembrane segment spans residues 247–267; the sequence is FSTCTAHISAIIITYVPAFFT. The Extracellular portion of the chain corresponds to 268–283; the sequence is FFAHRFGGHTIPPSLH. The helical transmembrane segment at 284-304 threads the bilayer; it reads IIVANLYLLLPPTLNPIVYGV. Over 305–324 the chain is Cytoplasmic; it reads KTKQIRKSVIKFFQGDKGAG.

This sequence belongs to the G-protein coupled receptor 1 family.

It is found in the cell membrane. Its function is as follows. Odorant receptor. This Homo sapiens (Human) protein is Olfactory receptor 52N5 (OR52N5).